The sequence spans 137 residues: Large ribosomal subunit protein uL16c (137 aa).

A disordered region spans residues 1 to 21; it reads MLSPKRTKFRRHHRGRMKGKA.

Belongs to the universal ribosomal protein uL16 family. Part of the 50S ribosomal subunit.

It is found in the plastid. Its subcellular location is the chloroplast. This Tupiella akineta (Green alga) protein is Large ribosomal subunit protein uL16c.